Here is a 144-residue protein sequence, read N- to C-terminus: Snake venom vascular endothelial growth factor toxin cratrin (144 aa).

Positions 1 to 24 (MAVYLLAVAILFCIQGWPSGTVQG) are cleaved as a signal peptide. Gln25 is subject to Pyrrolidone carboxylic acid. Disulfide bonds link Cys38/Cys80, Cys69/Cys115, and Cys73/Cys117. A disordered region spans residues 119-144 (PRSTVNNGKRKKNPKEGEPRAKFPLV). The segment covering 132 to 144 (PKEGEPRAKFPLV) has biased composition (basic and acidic residues).

This sequence belongs to the PDGF/VEGF growth factor family. Snake venom VEGF subfamily. Homodimer; disulfide-linked. Interacts with VEGF receptor-1 (FLT1) with a high affinity, whereas it binds to VEGF receptor-2 (KDR) with a low affinity. Does not bind VEGF receptor-3 (FLT4). As to expression, expressed by the venom gland.

It localises to the secreted. Its function is as follows. Snake venom VEGFs that may contribute to venom dispersion and prey subjugation by inducing vascular permeability and hypotension. This protein induces an increase in capillary permeability after intradermal injection, as well as a drastic hypotensive effect after intravenous injection. The hypotension is mediated by nitric oxide (NO), which is produced by VEGF-activated endothelium NO synthase. Also induces angiogenesis in vitro. Like other crotalid VEGFs, this protein interacts with VEGF receptor-1 (FLT1) with a high affinity, whereas it binds to VEGF receptor-2 (KDR) with a low affinity. This Crotalus atrox (Western diamondback rattlesnake) protein is Snake venom vascular endothelial growth factor toxin cratrin.